The chain runs to 144 residues: Phosphomevalonate dehydratase small subunit (144 aa).

The active-site Proton acceptor is Ser-65.

The protein belongs to the AcnX type II small subunit family. In terms of assembly, heterodimer composed of a large subunit (PMDh-L) and a small subunit (PMDh-S).

The enzyme catalyses (R)-5-phosphomevalonate = (2E)-3-methyl-5-phosphooxypent-2-enoate + H2O. It participates in isoprenoid biosynthesis; isopentenyl diphosphate biosynthesis via mevalonate pathway. Its function is as follows. Component of a hydro-lyase that catalyzes the dehydration of mevalonate 5-phosphate (MVA5P) to form trans-anhydromevalonate 5-phosphate (tAHMP). Involved in the archaeal mevalonate (MVA) pathway, which provides fundamental precursors for isoprenoid biosynthesis, such as isopentenyl diphosphate (IPP) and dimethylallyl diphosphate (DMAPP). The polypeptide is Phosphomevalonate dehydratase small subunit (Methanosarcina acetivorans (strain ATCC 35395 / DSM 2834 / JCM 12185 / C2A)).